We begin with the raw amino-acid sequence, 258 residues long: MSLKDSAKIALSLMDLTTLNDNDTDEKVITLCQQGKTEFGTPAAVCVYPRFVPIARKALKAQGTEQVKIATVTNFPHGNNDIDIAVAETKAAVAYGADEVDVVFPYKALMAGNEQIGFELVQQCKAVCQASNVLLKVIIETGELKTAELIRKASEISIKAGADFIKTSTGKVPVNATLEYARIMLETIRDLNVADRVGFKAAGGVKTAEEAAQYLALAQEILGHDWVNSDHFRFGASSLLTNLLAALNGQANQKVSGY.

Catalysis depends on aspartate 101, which acts as the Proton donor/acceptor. Lysine 166 serves as the catalytic Schiff-base intermediate with acetaldehyde. Lysine 200 serves as the catalytic Proton donor/acceptor.

Belongs to the DeoC/FbaB aldolase family. DeoC type 2 subfamily.

The protein resides in the cytoplasm. It catalyses the reaction 2-deoxy-D-ribose 5-phosphate = D-glyceraldehyde 3-phosphate + acetaldehyde. It functions in the pathway carbohydrate degradation; 2-deoxy-D-ribose 1-phosphate degradation; D-glyceraldehyde 3-phosphate and acetaldehyde from 2-deoxy-alpha-D-ribose 1-phosphate: step 2/2. In terms of biological role, catalyzes a reversible aldol reaction between acetaldehyde and D-glyceraldehyde 3-phosphate to generate 2-deoxy-D-ribose 5-phosphate. The protein is Deoxyribose-phosphate aldolase of Actinobacillus pleuropneumoniae serotype 5b (strain L20).